The chain runs to 204 residues: Holliday junction branch migration complex subunit RuvA (204 aa).

Positions 1–64 (MIGKLKGTLE…EEAIRLFGFA (64 aa)) are domain I. Positions 65–143 (TRAEQEWFCM…PFEQAVKTVS (79 aa)) are domain II. The tract at residues 144–154 (VPQREITHQPA) is flexible linker. The segment at 154-204 (AHDALSALMKLGFEREQAARALALAMNALEGEAVSSALLIRHSLKLLSSPT) is domain III.

It belongs to the RuvA family. As to quaternary structure, homotetramer. Forms an RuvA(8)-RuvB(12)-Holliday junction (HJ) complex. HJ DNA is sandwiched between 2 RuvA tetramers; dsDNA enters through RuvA and exits via RuvB. An RuvB hexamer assembles on each DNA strand where it exits the tetramer. Each RuvB hexamer is contacted by two RuvA subunits (via domain III) on 2 adjacent RuvB subunits; this complex drives branch migration. In the full resolvosome a probable DNA-RuvA(4)-RuvB(12)-RuvC(2) complex forms which resolves the HJ.

The protein localises to the cytoplasm. Its function is as follows. The RuvA-RuvB-RuvC complex processes Holliday junction (HJ) DNA during genetic recombination and DNA repair, while the RuvA-RuvB complex plays an important role in the rescue of blocked DNA replication forks via replication fork reversal (RFR). RuvA specifically binds to HJ cruciform DNA, conferring on it an open structure. The RuvB hexamer acts as an ATP-dependent pump, pulling dsDNA into and through the RuvAB complex. HJ branch migration allows RuvC to scan DNA until it finds its consensus sequence, where it cleaves and resolves the cruciform DNA. The protein is Holliday junction branch migration complex subunit RuvA of Bartonella tribocorum (strain CIP 105476 / IBS 506).